The following is a 118-amino-acid chain: Large ribosomal subunit protein uL22 (118 aa).

Belongs to the universal ribosomal protein uL22 family. As to quaternary structure, part of the 50S ribosomal subunit.

In terms of biological role, this protein binds specifically to 23S rRNA; its binding is stimulated by other ribosomal proteins, e.g. L4, L17, and L20. It is important during the early stages of 50S assembly. It makes multiple contacts with different domains of the 23S rRNA in the assembled 50S subunit and ribosome. Functionally, the globular domain of the protein is located near the polypeptide exit tunnel on the outside of the subunit, while an extended beta-hairpin is found that lines the wall of the exit tunnel in the center of the 70S ribosome. The polypeptide is Large ribosomal subunit protein uL22 (Treponema denticola (strain ATCC 35405 / DSM 14222 / CIP 103919 / JCM 8153 / KCTC 15104)).